The following is a 766-amino-acid chain: AGGKQILSDGPFSEVLRSAQEAIVVPPFVAIAVRPRPGVWEYVRVNVSELNVEQLTVSEYLHFKEELVDGKADDHYVLELDFEPFNESVPRPTRSSSIGNGVQFLNRHLSSSMFCNKDCLEPLLDFLRVHKHKGVVMMLNDRIQTIQRLQSALSKAEDYLIKLPADTPYSEFEFVIQGMGFERGWGDTAERVLEMMHLLLDILQAPDPSTLETFLGRLPMVFNVVILSVHGYFGQAHVLGLPDTGGQIVYILDQVRSLEHEMLQRIKKQGLDVTPRILIVSRLIPDAKGTTCNQRMEKVSGTEHASILRVPFRSEKGILRKWISRFDVWPYLETFTEDAAGEIIGELQGRPDLIIGNYSDGNIVASLLSHKMGVTQCNIAHALEKTKYPDSDIYWKRFEDKYHFSCQFSADLMAMNHADFIITSTYQEIAGTKNTVGQYESHKAFTFPGLYRVVHGIDVFDPKFNIVSPGADMAIYFPFSEKDVTCLTSLHRLIEQLLFKPEQNEEHIGVLDDTSKPIIFSMARLDRVKNITGLVECYGKNAKLRELANLVVVAGYNDVKKSNDREEIAEIEKMHRLIQEYNLRGQFRWIASQTNRVRNGELYRYICDKGGIFAQPAFYEAFGLTVVEAMTCGLPTFATCHGGPAEIIEDGVSGFHIDPYHADQAEKMTEFFVKCREDPNYWTKISAGGLLRIKERYTWQKYSERLMTLAGVYGFWKYVSKLERRETRRYLEMFYILKFRDLANSVPLATDEEPSTTDAVATFRGP.

The segment at 220 to 698 (MVFNVVILSV…GLLRIKERYT (479 aa)) is GT-B glycosyltransferase.

It belongs to the glycosyltransferase 1 family. Plant sucrose synthase subfamily. In terms of tissue distribution, expressed most predominantly in tap root.

It carries out the reaction an NDP-alpha-D-glucose + D-fructose = a ribonucleoside 5'-diphosphate + sucrose + H(+). Its function is as follows. Sucrose-cleaving enzyme that provides UDP-glucose and fructose for various metabolic pathways. This Beta vulgaris (Sugar beet) protein is Sucrose synthase (SS1).